The sequence spans 910 residues: Eukaryotic translation initiation factor 3 subunit C (910 aa).

Residues Met1–Gln21 are disordered. Positions Ser11–Ile20 are enriched in acidic residues. Phosphoserine is present on residues Ser34, Ser165, Ser176, and Ser185. Residues Phe157 to Asp279 are disordered. A compositionally biased stretch (acidic residues) spans Asp162 to Asp186. The segment covering Gly188 to Ala207 has biased composition (low complexity). The span at Ala209 to Asn235 shows a compositional bias: acidic residues. A compositionally biased stretch (basic and acidic residues) spans Met240–Ile268. Positions Phe639–Pro815 constitute a PCI domain. Positions Phe847–Glu910 are disordered. Residues Asn862–Gly874 show a composition bias toward low complexity. Residues Arg882–Lys891 are compositionally biased toward basic residues. Residues Asp895–Glu910 show a composition bias toward low complexity.

Belongs to the eIF-3 subunit C family. In terms of assembly, component of the eukaryotic translation initiation factor 3 (eIF-3) complex. The eIF-3 complex interacts with pix.

The protein resides in the cytoplasm. In terms of biological role, component of the eukaryotic translation initiation factor 3 (eIF-3) complex, which is involved in protein synthesis of a specialized repertoire of mRNAs and, together with other initiation factors, stimulates binding of mRNA and methionyl-tRNAi to the 40S ribosome. The eIF-3 complex specifically targets and initiates translation of a subset of mRNAs involved in cell proliferation. The sequence is that of Eukaryotic translation initiation factor 3 subunit C from Drosophila erecta (Fruit fly).